The chain runs to 691 residues: Inactive TPR repeat-containing thioredoxin TTL3 (691 aa).

Disordered stretches follow at residues 1-153 (MSHS…AVSP) and 174-209 (MASR…TSGK). Serine 8 is modified (phosphoserine). Residues 19–39 (RFRDLQRNDDDVNKPDFRELD) are compositionally biased toward basic and acidic residues. A phosphoserine mark is found at serine 42 and serine 45. Over residues 51 to 79 (GSASSSAAATPTSSSGSSGSASGKPSVSS) the composition is skewed to low complexity. Residues 83–93 (KRLDDAYKSHS) are compositionally biased toward basic and acidic residues. Composition is skewed to polar residues over residues 94–108 (GELS…TTTR), 118–140 (SSTG…HTSP), and 175–189 (ASRT…CTGT). TPR repeat units follow at residues 220–253 (PEEL…SPGN), 255–287 (AYRS…DPSY), 289–321 (RAHQ…PDQA), 327–362 (QTLE…GADS), 412–445 (AYVL…DQTN), 458–491 (VVRA…DDSN), 492–525 (SVLY…QPSY), and 527–559 (KALL…LPGD). The region spanning 596-683 (DKFKKSVALP…MVCPSHQFLE (88 aa)) is the Thioredoxin domain.

In terms of assembly, interacts with BRL2. In terms of tissue distribution, expressed in embryos and organ primordia in shoot and root. In primary and cauline leaves and petals, is expressed in hydathodes, guard cells, petiole cells and cells associated with differentiating vascular bundles.

Functionally, involved in osmotic and salt stress tolerance. May play a role in the control of meristematic cell size during osmotic stress. May function as an adapter protein for BRL2 and may be required for signaling affecting leaf vascular tissue pattern formation. In Arabidopsis thaliana (Mouse-ear cress), this protein is Inactive TPR repeat-containing thioredoxin TTL3.